The primary structure comprises 613 residues: Dihydroxy-acid dehydratase (613 aa).

A Mg(2+)-binding site is contributed by Asp-81. Cys-122 lines the [2Fe-2S] cluster pocket. The Mg(2+) site is built by Asp-123 and Lys-124. At Lys-124 the chain carries N6-carboxylysine. Residue Cys-195 coordinates [2Fe-2S] cluster. Position 491 (Glu-491) interacts with Mg(2+). Catalysis depends on Ser-517, which acts as the Proton acceptor.

The protein belongs to the IlvD/Edd family. In terms of assembly, homodimer. [2Fe-2S] cluster serves as cofactor. Mg(2+) is required as a cofactor.

The enzyme catalyses (2R)-2,3-dihydroxy-3-methylbutanoate = 3-methyl-2-oxobutanoate + H2O. It catalyses the reaction (2R,3R)-2,3-dihydroxy-3-methylpentanoate = (S)-3-methyl-2-oxopentanoate + H2O. It participates in amino-acid biosynthesis; L-isoleucine biosynthesis; L-isoleucine from 2-oxobutanoate: step 3/4. It functions in the pathway amino-acid biosynthesis; L-valine biosynthesis; L-valine from pyruvate: step 3/4. Its function is as follows. Functions in the biosynthesis of branched-chain amino acids. Catalyzes the dehydration of (2R,3R)-2,3-dihydroxy-3-methylpentanoate (2,3-dihydroxy-3-methylvalerate) into 2-oxo-3-methylpentanoate (2-oxo-3-methylvalerate) and of (2R)-2,3-dihydroxy-3-methylbutanoate (2,3-dihydroxyisovalerate) into 2-oxo-3-methylbutanoate (2-oxoisovalerate), the penultimate precursor to L-isoleucine and L-valine, respectively. The polypeptide is Dihydroxy-acid dehydratase (Hyphomonas neptunium (strain ATCC 15444)).